Consider the following 159-residue polypeptide: ATP synthase subunit b (159 aa).

A helical transmembrane segment spans residues 7–27; the sequence is TFVWTIINFLLLLVVLSYFLF.

The protein belongs to the ATPase B chain family. As to quaternary structure, F-type ATPases have 2 components, F(1) - the catalytic core - and F(0) - the membrane proton channel. F(1) has five subunits: alpha(3), beta(3), gamma(1), delta(1), epsilon(1). F(0) has three main subunits: a(1), b(2) and c(10-14). The alpha and beta chains form an alternating ring which encloses part of the gamma chain. F(1) is attached to F(0) by a central stalk formed by the gamma and epsilon chains, while a peripheral stalk is formed by the delta and b chains.

It localises to the cell membrane. F(1)F(0) ATP synthase produces ATP from ADP in the presence of a proton or sodium gradient. F-type ATPases consist of two structural domains, F(1) containing the extramembraneous catalytic core and F(0) containing the membrane proton channel, linked together by a central stalk and a peripheral stalk. During catalysis, ATP synthesis in the catalytic domain of F(1) is coupled via a rotary mechanism of the central stalk subunits to proton translocation. Functionally, component of the F(0) channel, it forms part of the peripheral stalk, linking F(1) to F(0). This chain is ATP synthase subunit b, found in Clostridium novyi (strain NT).